Reading from the N-terminus, the 1122-residue chain is Receptor-type guanylate cyclase gcy-5 (1122 aa).

The signal sequence occupies residues 1–19; that stretch reads MRLLYFSMVLLWVLGASEC. Over 20-486 the chain is Extracellular; sequence QVIPSSRRTL…CPVQFWDQYG (467 aa). N-linked (GlcNAc...) asparagine glycosylation is found at asparagine 252, asparagine 299, asparagine 344, asparagine 350, asparagine 378, asparagine 434, and asparagine 439. The chain crosses the membrane as a helical span at residues 487 to 507; the sequence is VLIFVASIVLIFLICIMLMCF. The Cytoplasmic segment spans residues 508–1122; that stretch reads GFMIRGRRAE…KSKMDTLKVV (615 aa). The segment at 536–562 is disordered; the sequence is QKEKRKPNSRRSLQSGPSTITGESKMT. Positions 542–830 constitute a Protein kinase domain; sequence PNSRRSLQSG…NTNLMDHVFN (289 aa). The segment covering 545–559 has biased composition (polar residues); the sequence is RRSLQSGPSTITGES. One can recognise a Guanylate cyclase domain in the interval 888–1018; sequence TVLFSDVVKF…DTVNTASRME (131 aa). The tract at residues 1071–1122 is disordered; it reads SDTKSLSTRTTPPITDENWPPQMKEDLKKRAVTPYPERQRSGKSKMDTLKVV. Over residues 1074–1083 the composition is skewed to polar residues; the sequence is KSLSTRTTPP. The segment covering 1107–1122 has biased composition (basic and acidic residues); the sequence is ERQRSGKSKMDTLKVV.

This sequence belongs to the adenylyl cyclase class-4/guanylyl cyclase family. Expressed in both ASEL and ASER neurons during early embryonic stages and becomes specifically expressed in ASER neuron in early larval stage.

Its subcellular location is the cell membrane. It carries out the reaction GTP = 3',5'-cyclic GMP + diphosphate. Functionally, guanylate cyclase involved in the production of the second messenger cGMP. Unlike other guanylate cyclases expressed in ASE neurons, may not play a role in chemotaxis responses to salt ions mediated by ASE sensory neurons. The chain is Receptor-type guanylate cyclase gcy-5 from Caenorhabditis elegans.